An 84-amino-acid chain; its full sequence is Small ribosomal subunit protein bS18A (84 aa).

It belongs to the bacterial ribosomal protein bS18 family. In terms of assembly, part of the 30S ribosomal subunit. Forms a tight heterodimer with protein bS6.

In terms of biological role, binds as a heterodimer with protein bS6 to the central domain of the 16S rRNA, where it helps stabilize the platform of the 30S subunit. The protein is Small ribosomal subunit protein bS18A (rpsR1) of Mycobacterium bovis (strain ATCC BAA-935 / AF2122/97).